A 205-amino-acid chain; its full sequence is Lymphotoxin-alpha (205 aa).

A signal peptide spans 1–34; the sequence is MTPPERLFLPRVCGTTLHLLLLGLLLVLLPGAQG. Residue Thr41 is glycosylated (O-linked (GalNAc...) threonine; partial). The region spanning 63–205 is the THD domain; sequence PAAHLIGDPS…STVFFGAFAL (143 aa). Asn96 is a glycosylation site (N-linked (GlcNAc...) asparagine).

The protein belongs to the tumor necrosis factor family. As to quaternary structure, homotrimer, and heterotrimer of either two LTB and one LTA subunits or (less prevalent) two LTA and one LTB subunits. Interacts with TNFRSF14.

It localises to the secreted. Its subcellular location is the membrane. Cytokine that in its homotrimeric form binds to TNFRSF1A/TNFR1, TNFRSF1B/TNFBR and TNFRSF14/HVEM. In its heterotrimeric form with LTB binds to TNFRSF3/LTBR. Lymphotoxin is produced by lymphocytes and is cytotoxic for a wide range of tumor cells in vitro and in vivo. In Homo sapiens (Human), this protein is Lymphotoxin-alpha (LTA).